We begin with the raw amino-acid sequence, 326 residues long: MNIAVLPNSPDTAPQIADPLDHLADKLFHSMGSDGVYARTALYESIVERLAALITSHREAGTEALRFPPVMSRAQLEKSGYLKSFPNLLGCVCGLHGTEREINAAVSRFDAGGDWTTSLSPADLVLSPAACYPVYPIAASRGPLPKGGLRFDVAADCFRREPSKHLDRLQSFRMREYVCIGTPDDVSDFRERWMVRAQAIARDLGLTFRVDYASDPFFGRVGQMKAVSQKQQQLKFELLIPLRSEEQPTACMSFNYHREHFGTTWGIQDANGEPAHTGCVAFGMDRLAVAMFHTHGTDLSAWPAKVRDILGLQPHVAAGAHGEGWR.

Cys-131 lines the Zn(2+) pocket. ATP-binding positions include Arg-159, Glu-161, and 168–169 (RL). Glu-176 provides a ligand contact to Zn(2+). Glu-176 lines the an L-alpha-amino acid pocket. ATP-binding positions include Lys-235 and 250–253 (ACMS). Cys-279 lines the Zn(2+) pocket. Position 286 (Arg-286) interacts with ATP.

The protein belongs to the class-II aminoacyl-tRNA synthetase family. Amino acid--[acyl-carrier-protein] ligase subfamily. As to quaternary structure, homodimer. The cofactor is Zn(2+).

The catalysed reaction is an L-alpha-amino acid + holo-[ACP] + ATP = an L-alpha-aminoacyl-[ACP] + AMP + diphosphate. Catalyzes the ATP-dependent activation of L-glycine and its transfer to the phosphopantetheine prosthetic group covalently attached to the vicinal carrier protein bsr0959 of yet unknown function. May participate in nonribosomal peptide synthesis or related processes. L-alanine is a poor substrate whereas L-serine or D-amino acids are not substrates for ATP-dependent activation. Does not display tRNA aminoacylation activity. In Bradyrhizobium diazoefficiens (strain JCM 10833 / BCRC 13528 / IAM 13628 / NBRC 14792 / USDA 110), this protein is Amino acid--[acyl-carrier-protein] ligase 1.